The primary structure comprises 264 residues: Tryptophan synthase alpha chain (264 aa).

Residues Glu-45 and Asp-56 each act as proton acceptor in the active site.

Belongs to the TrpA family. Tetramer of two alpha and two beta chains.

The enzyme catalyses (1S,2R)-1-C-(indol-3-yl)glycerol 3-phosphate + L-serine = D-glyceraldehyde 3-phosphate + L-tryptophan + H2O. Its pathway is amino-acid biosynthesis; L-tryptophan biosynthesis; L-tryptophan from chorismate: step 5/5. Its function is as follows. The alpha subunit is responsible for the aldol cleavage of indoleglycerol phosphate to indole and glyceraldehyde 3-phosphate. This Leptospira interrogans serogroup Icterohaemorrhagiae serovar copenhageni (strain Fiocruz L1-130) protein is Tryptophan synthase alpha chain.